A 580-amino-acid chain; its full sequence is Pentatricopeptide repeat-containing protein At5g10690 (580 aa).

PPR repeat units lie at residues 76–110, 112–142, 151–181, 189–223, 224–254, 266–296, 302–337, 342–376, and 382–417; these read NTIV…GGIG, DSIS…IEYG, SSSL…YDIL, SVLI…RLEP, DRLT…MKEK, DVVT…MKLC, DRTA…GANE, KPHL…SSGS, and QQEA…KTIP. Residues 486–553 form the CBS domain; it reads VPIVDDRGSC…IVVHCGNFSG (68 aa).

The protein belongs to the PPR family. P subfamily.

In Arabidopsis thaliana (Mouse-ear cress), this protein is Pentatricopeptide repeat-containing protein At5g10690 (CBSPPR1).